The following is a 161-amino-acid chain: AP-1 complex subunit sigma-1 (161 aa).

The protein belongs to the adaptor complexes small subunit family. As to quaternary structure, adaptor protein complex 1 (AP-1) is a heterotetramer composed of two large adaptins (gamma-type subunit and beta-type subunit), a medium adaptin (mu-type subunit) and a small adaptin (sigma-type subunit). In terms of tissue distribution, expressed in seedlings, roots, stems, leaves, flowers and siliques (developing fruits and seeds).

The protein resides in the golgi apparatus. It localises to the cytoplasmic vesicle. It is found in the clathrin-coated vesicle membrane. Subunit of clathrin-associated adaptor protein complex 1 that plays a role in protein sorting at the trans-Golgi network and early endosomes (TGN/EE). The AP complexes mediate the recruitment of clathrin to membranes and the recognition of sorting signals within the cytosolic tails of transmembrane cargo molecules. The chain is AP-1 complex subunit sigma-1 (AAP19-1) from Arabidopsis thaliana (Mouse-ear cress).